Consider the following 320-residue polypeptide: Mitochondrial thiamine pyrophosphate carrier (320 aa).

Solcar repeat units follow at residues Asn13–Leu106, Arg116–Leu202, and Asn214–Val309. A helical membrane pass occupies residues Ala19–Ile39. A Phosphoserine modification is found at Ser51. A run of 4 helical transmembrane segments spans residues Ile87–Val107, Phe122–Leu142, Val173–Phe193, and Leu220–Phe240. The Substrate recognition motif lies at Lys241–Val246. The chain crosses the membrane as a helical span at residues Ala293–Met313.

The protein belongs to the mitochondrial carrier (TC 2.A.29) family.

It localises to the mitochondrion membrane. It carries out the reaction thiamine phosphate(out) + thiamine diphosphate(in) = thiamine phosphate(in) + thiamine diphosphate(out). Functionally, mitochondrial transporter mediating uptake of thiamine diphosphate into mitochondria. It is not clear if the antiporter activity is affected by the membrane potential or by the proton electrochemical gradient. The sequence is that of Mitochondrial thiamine pyrophosphate carrier (SLC25A19) from Macaca fascicularis (Crab-eating macaque).